Here is a 301-residue protein sequence, read N- to C-terminus: Probable alpha-L-glutamate ligase (301 aa).

One can recognise an ATP-grasp domain in the interval 104-287 (LQLLSRKGVG…VAGRIVSFIE (184 aa)). ATP is bound by residues Lys141, 178–179 (EF), Asp187, and 211–213 (RSN). The Mg(2+) site is built by Asp248, Glu260, and Asn262. Mn(2+) contacts are provided by Asp248, Glu260, and Asn262.

This sequence belongs to the RimK family. Requires Mg(2+) as cofactor. The cofactor is Mn(2+).

This Thioalkalivibrio sulfidiphilus (strain HL-EbGR7) protein is Probable alpha-L-glutamate ligase.